The following is a 200-amino-acid chain: uncharacterized protein (200 aa).

The chain crosses the membrane as a helical span at residues 104-124; sequence SNLLICFLFLCGLYHISVFTG.

Its subcellular location is the membrane. This is an uncharacterized protein from Escherichia coli (strain K12).